The primary structure comprises 365 residues: MQNVGPTEPSKSQVFRCPAAGCKAVYRKEGKLRDHMAGHSEQKLWKCGKKDCGKMFARKRQIQKHMKRHLTLKKHSCPTAGCKMTFSTKKSLSRHKLYKHGDAVPLKCSVPGCKRSFRKKRALRIHVSEHSNEPLSVCDVPGCGWKSTSAAKLAAHHRRHGGYRCSYEDCQTVSPTWTALQTHLKKHPLELQCAACKKPFKKASALRRHKATHAKNPLQLPCPRQDCDKIFSTVFNLTHHLRKVHLCLQTHRCPHSNCTRSFAMRESLVRHLVVHDPERKKLKLKFGRRPSKFLGRGTRCPTPVVEEDLSHLFSRKLLFHYKTRLETNLSGLFNERQLREPAEPEVNLSGLFQLPQGRPKAEKAA.

C2H2-type zinc fingers lie at residues Phe-15–His-39, Trp-45–His-69, His-75–His-100, Leu-106–His-130, Ser-136–His-160, Tyr-163–His-187, Leu-191–His-213, Leu-220–His-245, and His-251–His-275.

The 42S RNP particle comprises four subunits each of which contains one molecule of 5S RNA, three molecules of tRNA, two molecules of p50 (EF1-alpha) and one molecule of the 5S RNA binding protein 43.

P43 is a 5S RNA binding protein which is a major constituent of oocytes and comprises part of a 42S ribonucleoprotein storage particle. This Xenopus borealis (Kenyan clawed frog) protein is P43 5S RNA-binding protein.